A 23-amino-acid polypeptide reads, in one-letter code: Caerulein precursor fragment BM2 (23 aa).

As to expression, expressed by the skin glands.

It localises to the secreted. Functionally, antimicrobial peptide. The protein is Caerulein precursor fragment BM2 of Xenopus boumbaensis (Mawa clawed frog).